Reading from the N-terminus, the 233-residue chain is Biosynthetic peptidoglycan transglycosylase (233 aa).

Residues 17-37 (IVLAVLALVILPYALIFFYVL) form a helical membrane-spanning segment.

The protein belongs to the glycosyltransferase 51 family.

Its subcellular location is the cell inner membrane. It catalyses the reaction [GlcNAc-(1-&gt;4)-Mur2Ac(oyl-L-Ala-gamma-D-Glu-L-Lys-D-Ala-D-Ala)](n)-di-trans,octa-cis-undecaprenyl diphosphate + beta-D-GlcNAc-(1-&gt;4)-Mur2Ac(oyl-L-Ala-gamma-D-Glu-L-Lys-D-Ala-D-Ala)-di-trans,octa-cis-undecaprenyl diphosphate = [GlcNAc-(1-&gt;4)-Mur2Ac(oyl-L-Ala-gamma-D-Glu-L-Lys-D-Ala-D-Ala)](n+1)-di-trans,octa-cis-undecaprenyl diphosphate + di-trans,octa-cis-undecaprenyl diphosphate + H(+). It participates in cell wall biogenesis; peptidoglycan biosynthesis. In terms of biological role, peptidoglycan polymerase that catalyzes glycan chain elongation from lipid-linked precursors. This chain is Biosynthetic peptidoglycan transglycosylase, found in Rhizobium leguminosarum bv. trifolii (strain WSM2304).